A 70-amino-acid polypeptide reads, in one-letter code: MPQEIKEVKDFLIKARRKDARAVKIKKNENNTKFKIRCSRYLYTLVVQDKEKAEKLKQSLPPGLQVKEVK.

The protein belongs to the eukaryotic ribosomal protein eL38 family.

This Aedes aegypti (Yellowfever mosquito) protein is Large ribosomal subunit protein eL38 (RpL38).